The primary structure comprises 336 residues: Vacuolar protein sorting-associated protein 26B (336 aa).

Ser-302, Ser-304, and Ser-319 each carry phosphoserine.

This sequence belongs to the VPS26 family. Component of the heterotrimeric retromer cargo-selective complex (CSC), also described as vacuolar protein sorting subcomplex (VPS), formed by VPS26 (VPS26A or VPS26B), VPS29 and VPS35. The CSC has a highly elongated structure with VPS26 and VPS29 binding independently at opposite distal ends of VPS35 as central platform. The CSC is believed to associate with variable sorting nexins to form functionally distinct retromer complex variants. The originally described SNX-BAR retromer is a pentamer containing the CSC and a heterodimeric membrane-deforming subcomplex formed between SNX1 or SNX2 and SNX5 or SNX6 (also called SNX-BAR subcomplex); the respective CSC and SNX-BAR subcomplexes associate with low affinity. The CSC associates with SNX3 to form a SNX3-retromer complex. The CSC associates with SNX27, the WASH complex and the SNX-BAR subcomplex to form the SNX27-retromer complex. Interacts with VPS29, VPS35, TBC1D5, GOLPH3, SNX27.

The protein localises to the cytoplasm. It localises to the membrane. The protein resides in the early endosome. Its subcellular location is the late endosome. Its function is as follows. Acts as a component of the retromer cargo-selective complex (CSC). The CSC is believed to be the core functional component of retromer or respective retromer complex variants acting to prevent missorting of selected transmembrane cargo proteins into the lysosomal degradation pathway. The recruitment of the CSC to the endosomal membrane involves RAB7A and SNX3. The SNX-BAR retromer mediates retrograde transport of cargo proteins from endosomes to the trans-Golgi network (TGN) and is involved in endosome-to-plasma membrane transport for cargo protein recycling. The SNX3-retromer mediates the retrograde transport of WLS distinct from the SNX-BAR retromer pathway. The SNX27-retromer is believed to be involved in endosome-to-plasma membrane trafficking and recycling of a broad spectrum of cargo proteins. The CSC seems to act as recruitment hub for other proteins, such as the WASH complex and TBC1D5. May be involved in retrograde transport of SORT1 but not of IGF2R. Acts redundantly with VSP26A in SNX-27 mediated endocytic recycling of SLC2A1/GLUT1. In Pongo abelii (Sumatran orangutan), this protein is Vacuolar protein sorting-associated protein 26B (VPS26B).